The following is a 943-amino-acid chain: Isoleucine--tRNA ligase (943 aa).

The 'HIGH' region signature appears at 59 to 69 (PYANGQIHLGH). Glu577 provides a ligand contact to L-isoleucyl-5'-AMP. A 'KMSKS' region motif is present at residues 618-622 (KMSKS). ATP is bound at residue Lys621. Cys906, Cys909, Cys926, and Cys929 together coordinate Zn(2+).

Belongs to the class-I aminoacyl-tRNA synthetase family. IleS type 1 subfamily. In terms of assembly, monomer. The cofactor is Zn(2+).

It localises to the cytoplasm. The catalysed reaction is tRNA(Ile) + L-isoleucine + ATP = L-isoleucyl-tRNA(Ile) + AMP + diphosphate. In terms of biological role, catalyzes the attachment of isoleucine to tRNA(Ile). As IleRS can inadvertently accommodate and process structurally similar amino acids such as valine, to avoid such errors it has two additional distinct tRNA(Ile)-dependent editing activities. One activity is designated as 'pretransfer' editing and involves the hydrolysis of activated Val-AMP. The other activity is designated 'posttransfer' editing and involves deacylation of mischarged Val-tRNA(Ile). In Xanthomonas campestris pv. campestris (strain 8004), this protein is Isoleucine--tRNA ligase.